Reading from the N-terminus, the 394-residue chain is Serine palmitoyltransferase (394 aa).

Residues 111 to 112 (GF), S183, H211, and T239 contribute to the pyridoxal 5'-phosphate site. N6-(pyridoxal phosphate)lysine is present on K242.

Belongs to the class-II pyridoxal-phosphate-dependent aminotransferase family. The cofactor is pyridoxal 5'-phosphate.

It carries out the reaction L-serine + hexadecanoyl-CoA + H(+) = 3-oxosphinganine + CO2 + CoA. Its pathway is lipid metabolism; sphingolipid metabolism. In terms of biological role, involved in de novo bacterial ceramide synthesis. Catalyzes the condensation of L-serine with palmitoyl-CoA (hexadecanoyl-CoA) to produce 3-oxosphinganine. Also capable of using alanine as substrate leading to the formation of 1-deoxysphinganine (1-deoxySa). Contributes to the levels of endogenous sphingolipids in its host. The sequence is that of Serine palmitoyltransferase from Bacteroides thetaiotaomicron (strain ATCC 29148 / DSM 2079 / JCM 5827 / CCUG 10774 / NCTC 10582 / VPI-5482 / E50).